An 87-amino-acid chain; its full sequence is Small ribosomal subunit protein bS20 (87 aa).

Basic residues predominate over residues 1-15; the sequence is MANTRSAKKMVRKIA. Disordered stretches follow at residues 1–22 and 64–87; these read MANT…DVNK and KGVT…KAMA.

The protein belongs to the bacterial ribosomal protein bS20 family.

Its function is as follows. Binds directly to 16S ribosomal RNA. This Hyphomonas neptunium (strain ATCC 15444) protein is Small ribosomal subunit protein bS20.